We begin with the raw amino-acid sequence, 297 residues long: 3-mercaptopyruvate sulfurtransferase (297 aa).

An N-acetylalanine modification is found at A2. Positions 25 to 144 (SSQPLKLLDA…WLNQNLPISS (120 aa)) constitute a Rhodanese 1 domain. Phosphoserine is present on S35. K40 carries the N6-acetyllysine; alternate modification. N6-succinyllysine; alternate is present on K40. The hinge stretch occupies residues 145–160 (GKSHSEPAEFSAQLDP). N6-succinyllysine occurs at positions 146 and 164. Positions 174 to 288 (DARRFQVVDA…WYMRAQPEHI (115 aa)) constitute a Rhodanese 2 domain. Substrate is bound at residue R188. C248 functions as the Cysteine persulfide intermediate in the catalytic mechanism.

In terms of assembly, monomer (active form). Homodimer; disulfide-linked (inactive form). In terms of tissue distribution, expressed in the brain and retina. In the retina, localized to the inner and outer plexiform layer, the inner and outer nuclear layer and the outer segments of photoreceptors. In the brain, localized to neurons of mitral cell layers, glomerular, and external plexiform layers in the olfactory bulb. Also found in Purkinje cell stomata and proximal dendrites. In the spinal cord, localized to large neurons. In the cerebral cortex, localized to pyramidial neurons in layers II/III and V, and in layers I-VI of neocortical areas. In the hippocampus, found in CA1 and CA3 pyramidal cells.

The protein resides in the cytoplasm. It is found in the mitochondrion. The protein localises to the synapse. It localises to the synaptosome. The catalysed reaction is 2-oxo-3-sulfanylpropanoate + [thioredoxin]-dithiol = [thioredoxin]-disulfide + hydrogen sulfide + pyruvate + H(+). Its activity is regulated as follows. By oxidative stress, and thioredoxin. Under oxidative stress conditions, the catalytic cysteine site is converted to a sulfenate which inhibits the MPST enzyme activity. Reduced thioredoxin cleaves an intersubunit disulfide bond to turn on the redox switch and reactivate the enzyme. Inhibited by different oxidants, hydrogen peroxide and tetrathionate. In terms of biological role, transfer of a sulfur ion to cyanide or to other thiol compounds. Also has weak rhodanese activity. Detoxifies cyanide and is required for thiosulfate biosynthesis. Acts as an antioxidant. In combination with cysteine aminotransferase (CAT), contributes to the catabolism of cysteine and is an important producer of hydrogen sulfide in the brain, retina and vascular endothelial cells. Hydrogen sulfide H(2)S is an important synaptic modulator, signaling molecule, smooth muscle contractor and neuroprotectant. Its production by the 3MST/CAT pathway is regulated by calcium ions. This is 3-mercaptopyruvate sulfurtransferase (Mpst) from Mus musculus (Mouse).